Reading from the N-terminus, the 258-residue chain is MAKKFDKDSFSGTLIVVLAVSLICSVIVAGAVVGLKPIQEKQKLQDKQGYILSVAGLMDKDTDIGKTFAERIEQRVVDLATGEYVADAPKDFSARIAGKDPAQSIRIKTEDDLAGIKSRAKYTEVYLVKGEDGKIGQIILPMHGNGLWSVMYGFVAIQPDGNTINGITYYEQGETPGLGGEIGNPLWQQKFVGKKLFDGQGKLALHVGKGAGSDKEHGVDALSGASLTSKGVQGSFAYWFGENGYIPYLNKLKSAGAQ.

A helical membrane pass occupies residues 14-34 (LIVVLAVSLICSVIVAGAVVG). An FMN phosphoryl serine modification is found at serine 226.

Belongs to the NqrC family. Composed of six subunits; NqrA, NqrB, NqrC, NqrD, NqrE and NqrF. The cofactor is FMN.

It localises to the cell inner membrane. The enzyme catalyses a ubiquinone + n Na(+)(in) + NADH + H(+) = a ubiquinol + n Na(+)(out) + NAD(+). In terms of biological role, NQR complex catalyzes the reduction of ubiquinone-1 to ubiquinol by two successive reactions, coupled with the transport of Na(+) ions from the cytoplasm to the periplasm. NqrA to NqrE are probably involved in the second step, the conversion of ubisemiquinone to ubiquinol. The polypeptide is Na(+)-translocating NADH-quinone reductase subunit C (Neisseria meningitidis serogroup B (strain ATCC BAA-335 / MC58)).